The following is a 267-amino-acid chain: MSLKQITISTLRQWKLANKKFACITAYDASFSRLFAEQGMPVMLVGDSLGMTAQGHSTTLPVSVEDIAYHTKSVRRGAPNRLLMADLPFMSYSTWEDACKNAATVMRAGANIVKIEGGGNWIFEIVQRLTERSVPVAGHLGLTPQSVNIFGGYKIQGREQSAAARLIENAQQLEKFGAQLLVLECIPESLAEQITKTISIPTIGIGAGKHTDGQILVMHDALGITGGRPPKFAKNFLSGAGDIRTAIQRYIYEVEQGLYPAEEHSFQ.

Belongs to the PanB family.

The catalysed reaction is 3-methyl-2-oxobutanoate + (6R)-5,10-methylene-5,6,7,8-tetrahydrofolate + H2O = 2-dehydropantoate + (6S)-5,6,7,8-tetrahydrofolate. It participates in cofactor biosynthesis; (R)-pantothenate biosynthesis; (R)-pantoate from 3-methyl-2-oxobutanoate: step 1/2. The polypeptide is Probable 3-methyl-2-oxobutanoate hydroxymethyltransferase (Schizosaccharomyces pombe (strain 972 / ATCC 24843) (Fission yeast)).